A 146-amino-acid chain; its full sequence is Flavodoxin (146 aa).

The region spanning 4 to 143 (ALIVYGSTTG…EVLDWAREVL (140 aa)) is the Flavodoxin-like domain.

This sequence belongs to the flavodoxin family. It depends on FMN as a cofactor.

Its function is as follows. Electron-transfer proteins that function in various electron transport systems in microorganisms. Functionally interchangeable with ferredoxin. This chain is Flavodoxin, found in Megalodesulfovibrio gigas (strain ATCC 19364 / DSM 1382 / NCIMB 9332 / VKM B-1759) (Desulfovibrio gigas).